The primary structure comprises 157 residues: Protein-export protein SecB (157 aa).

The protein belongs to the SecB family. As to quaternary structure, homotetramer, a dimer of dimers. One homotetramer interacts with 1 SecA dimer.

Its subcellular location is the cytoplasm. One of the proteins required for the normal export of preproteins out of the cell cytoplasm. It is a molecular chaperone that binds to a subset of precursor proteins, maintaining them in a translocation-competent state. It also specifically binds to its receptor SecA. The polypeptide is Protein-export protein SecB (Alcanivorax borkumensis (strain ATCC 700651 / DSM 11573 / NCIMB 13689 / SK2)).